A 73-amino-acid polypeptide reads, in one-letter code: Disintegrin barbourin (73 aa).

Residues 1-73 (EAGEECDCGS…ADCPRNGLYG (73 aa)) form the Disintegrin domain. 6 disulfide bridges follow: C6–C21, C8–C16, C15–C38, C29–C35, C34–C59, and C47–C66. Residues 51 to 53 (KGD) carry the Cell attachment site; atypical (KGD) motif.

The protein belongs to the venom metalloproteinase (M12B) family. P-II subfamily. P-IIa sub-subfamily. In terms of assembly, monomer. In terms of tissue distribution, expressed by the venom gland.

It is found in the secreted. Its function is as follows. Inhibitor of ligand binding to the integrins alpha-IIb/beta-3 (ITGA2B/ITGB3). Competition with fibrinogen for the RGD recognition sites on the alpha-IIb/beta-3 integrin results in the inhibition of platelet aggregation induced by ADP, thrombin, platelet-activating factor and collagen. The protein is Disintegrin barbourin of Sistrurus miliarius barbouri (Dusky pigmy rattlesnake).